A 598-amino-acid polypeptide reads, in one-letter code: Probable translation initiation factor IF-2 (598 aa).

The tr-type G domain occupies 3–225 (LRCPIVSVLG…GLAQKFLEQK (223 aa)). Positions 12 to 19 (GHVDHGKT) are G1. 12–19 (GHVDHGKT) serves as a coordination point for GTP. The segment at 37-41 (GITQH) is G2. The interval 76-79 (DTPG) is G3. GTP contacts are provided by residues 76-80 (DTPGH) and 130-133 (NKVD). The interval 130–133 (NKVD) is G4. Residues 200-202 (SAM) form a G5 region.

Belongs to the TRAFAC class translation factor GTPase superfamily. Classic translation factor GTPase family. IF-2 subfamily.

Function in general translation initiation by promoting the binding of the formylmethionine-tRNA to ribosomes. Seems to function along with eIF-2. This chain is Probable translation initiation factor IF-2, found in Methanococcus maripaludis (strain C5 / ATCC BAA-1333).